Reading from the N-terminus, the 434-residue chain is (3,5-dihydroxyphenyl)acetyl-CoA 1,2-dioxygenase (434 aa).

Residues aspartate 184, glutamate 190, 223–226 (HPRY), 234–239 (AGINLK), glycine 293, 322–324 (IPG), and glutamine 413 contribute to the substrate site.

The protein belongs to the enoyl-CoA hydratase/isomerase family. As to quaternary structure, homohexamer; dimer of trimers.

The enzyme catalyses (3,5-dihydroxyphenyl)acetyl-CoA + O2 = 2-(3,5-dihydroxyphenyl)-2-oxoacetate + CoA + H(+). Functionally, involved in the biosynthesis of the nonproteinogenic amino acid monomer (S)-3,5-dihydroxyphenylglycine (Dpg) responsible of the production of vancomycin and teicoplanin antibiotics. Catalyzes the unusual conversion 3,5-dihydroxyphenylacetyl-CoA (DPA-CoA) to 3,5-dihydroxyphenylglyoxylate. DpgC performed a net four-electron oxidation of the benzylic carbon of DPA-CoA and the hydrolysis of the thioester bond to generate free CoA. It can also use phenylacetyl-CoA (PA-CoA) as substrate. In Amycolatopsis orientalis (Nocardia orientalis), this protein is (3,5-dihydroxyphenyl)acetyl-CoA 1,2-dioxygenase (dpgC).